The following is an 842-amino-acid chain: Translation initiation factor IF-2 (842 aa).

2 disordered regions span residues M1–D41 and R112–Q219. Composition is skewed to basic and acidic residues over residues P32–D41 and R153–S165. One can recognise a tr-type G domain in the interval A328–R497. Positions G337–T344 are G1. Residue G337 to T344 coordinates GTP. The interval G362–H366 is G2. A G3 region spans residues D383 to G386. GTP contacts are provided by residues D383 to H387 and N437 to D440. The G4 stretch occupies residues N437–D440. The interval S473–L475 is G5.

The protein belongs to the TRAFAC class translation factor GTPase superfamily. Classic translation factor GTPase family. IF-2 subfamily.

Its subcellular location is the cytoplasm. Its function is as follows. One of the essential components for the initiation of protein synthesis. Protects formylmethionyl-tRNA from spontaneous hydrolysis and promotes its binding to the 30S ribosomal subunits. Also involved in the hydrolysis of GTP during the formation of the 70S ribosomal complex. This Treponema pallidum (strain Nichols) protein is Translation initiation factor IF-2 (infB).